Here is a 231-residue protein sequence, read N- to C-terminus: 5'-methylthioadenosine/S-adenosylhomocysteine nucleosidase (231 aa).

Catalysis depends on E12, which acts as the Proton acceptor. Substrate-binding positions include G78, M153, and 174-175 (ME). D198 functions as the Proton donor in the catalytic mechanism.

The protein belongs to the PNP/UDP phosphorylase family. MtnN subfamily.

It carries out the reaction S-adenosyl-L-homocysteine + H2O = S-(5-deoxy-D-ribos-5-yl)-L-homocysteine + adenine. The enzyme catalyses S-methyl-5'-thioadenosine + H2O = 5-(methylsulfanyl)-D-ribose + adenine. The catalysed reaction is 5'-deoxyadenosine + H2O = 5-deoxy-D-ribose + adenine. The protein operates within amino-acid biosynthesis; L-methionine biosynthesis via salvage pathway; S-methyl-5-thio-alpha-D-ribose 1-phosphate from S-methyl-5'-thioadenosine (hydrolase route): step 1/2. Functionally, catalyzes the irreversible cleavage of the glycosidic bond in both 5'-methylthioadenosine (MTA) and S-adenosylhomocysteine (SAH/AdoHcy) to adenine and the corresponding thioribose, 5'-methylthioribose and S-ribosylhomocysteine, respectively. Also cleaves 5'-deoxyadenosine, a toxic by-product of radical S-adenosylmethionine (SAM) enzymes, into 5-deoxyribose and adenine. In Bacillus pumilus (strain SAFR-032), this protein is 5'-methylthioadenosine/S-adenosylhomocysteine nucleosidase.